We begin with the raw amino-acid sequence, 101 residues long: Large ribosomal subunit protein uL23 (101 aa).

It belongs to the universal ribosomal protein uL23 family. In terms of assembly, part of the 50S ribosomal subunit. Contacts protein L29, and trigger factor when it is bound to the ribosome.

In terms of biological role, one of the early assembly proteins it binds 23S rRNA. One of the proteins that surrounds the polypeptide exit tunnel on the outside of the ribosome. Forms the main docking site for trigger factor binding to the ribosome. The polypeptide is Large ribosomal subunit protein uL23 (Thiobacillus denitrificans (strain ATCC 25259 / T1)).